The sequence spans 84 residues: Large ribosomal subunit protein bL27 (84 aa).

Residues 1-21 (MAHKKGASSTRNGRDSNAQRL) are disordered. Residues 7–19 (ASSTRNGRDSNAQ) show a composition bias toward polar residues.

Belongs to the bacterial ribosomal protein bL27 family.

The chain is Large ribosomal subunit protein bL27 from Clavibacter michiganensis subsp. michiganensis (strain NCPPB 382).